Consider the following 326-residue polypeptide: Peroxidase 41 (326 aa).

The first 20 residues, 1–20 (MSSVINVLFVVLVFVPSIYS), serve as a signal peptide directing secretion. The N-linked (GlcNAc...) asparagine glycan is linked to Asn-25. Cystine bridges form between Cys-35-Cys-116, Cys-68-Cys-73, Cys-122-Cys-318, and Cys-201-Cys-228. The Proton acceptor role is filled by His-66. Residues Asp-67, Gly-72, Asp-74, and Ser-76 each coordinate Ca(2+). Pro-164 contributes to the substrate binding site. N-linked (GlcNAc...) asparagine glycosylation is present at Asn-167. Heme b is bound at residue His-194. Thr-195 serves as a coordination point for Ca(2+). A glycan (N-linked (GlcNAc...) asparagine) is linked at Asn-234. Residues Asp-242, Thr-245, and Asp-250 each contribute to the Ca(2+) site. N-linked (GlcNAc...) asparagine glycosylation occurs at Asn-286.

It belongs to the peroxidase family. Classical plant (class III) peroxidase subfamily. The cofactor is heme b. Requires Ca(2+) as cofactor.

It is found in the secreted. It catalyses the reaction 2 a phenolic donor + H2O2 = 2 a phenolic radical donor + 2 H2O. Its function is as follows. Removal of H(2)O(2), oxidation of toxic reductants, biosynthesis and degradation of lignin, suberization, auxin catabolism, response to environmental stresses such as wounding, pathogen attack and oxidative stress. These functions might be dependent on each isozyme/isoform in each plant tissue. This is Peroxidase 41 (PER41) from Arabidopsis thaliana (Mouse-ear cress).